The chain runs to 255 residues: Phosphoribosylformylglycinamidine synthase subunit PurQ (255 aa).

The Glutamine amidotransferase type-1 domain occupies 6 to 255 (TLILRTPGTN…TNAVKWARQV (250 aa)). Residue Cys-96 is the Nucleophile of the active site. Residues His-217 and Glu-219 contribute to the active site.

Part of the FGAM synthase complex composed of 1 PurL, 1 PurQ and 2 PurS subunits.

It is found in the cytoplasm. The enzyme catalyses N(2)-formyl-N(1)-(5-phospho-beta-D-ribosyl)glycinamide + L-glutamine + ATP + H2O = 2-formamido-N(1)-(5-O-phospho-beta-D-ribosyl)acetamidine + L-glutamate + ADP + phosphate + H(+). It carries out the reaction L-glutamine + H2O = L-glutamate + NH4(+). It participates in purine metabolism; IMP biosynthesis via de novo pathway; 5-amino-1-(5-phospho-D-ribosyl)imidazole from N(2)-formyl-N(1)-(5-phospho-D-ribosyl)glycinamide: step 1/2. Part of the phosphoribosylformylglycinamidine synthase complex involved in the purines biosynthetic pathway. Catalyzes the ATP-dependent conversion of formylglycinamide ribonucleotide (FGAR) and glutamine to yield formylglycinamidine ribonucleotide (FGAM) and glutamate. The FGAM synthase complex is composed of three subunits. PurQ produces an ammonia molecule by converting glutamine to glutamate. PurL transfers the ammonia molecule to FGAR to form FGAM in an ATP-dependent manner. PurS interacts with PurQ and PurL and is thought to assist in the transfer of the ammonia molecule from PurQ to PurL. This is Phosphoribosylformylglycinamidine synthase subunit PurQ from Dehalococcoides mccartyi (strain ATCC BAA-2266 / KCTC 15142 / 195) (Dehalococcoides ethenogenes (strain 195)).